The following is a 334-amino-acid chain: Holliday junction branch migration complex subunit RuvB (334 aa).

A large ATPase domain (RuvB-L) region spans residues 1-182 (MDERLVSSEA…FGVMSRLEYY (182 aa)). Residues Leu-21, Arg-22, Gly-63, Lys-66, Thr-67, Thr-68, 129-131 (EDF), Arg-172, Tyr-182, and Arg-219 each bind ATP. Thr-67 is a Mg(2+) binding site. The segment at 183-253 (TQEELADIVT…ISQNALERLQ (71 aa)) is small ATPAse domain (RuvB-S). The tract at residues 256 to 334 (RLGLDHIDHK…HFQMEAPRYD (79 aa)) is head domain (RuvB-H). DNA is bound by residues Arg-311 and Arg-316.

It belongs to the RuvB family. Homohexamer. Forms an RuvA(8)-RuvB(12)-Holliday junction (HJ) complex. HJ DNA is sandwiched between 2 RuvA tetramers; dsDNA enters through RuvA and exits via RuvB. An RuvB hexamer assembles on each DNA strand where it exits the tetramer. Each RuvB hexamer is contacted by two RuvA subunits (via domain III) on 2 adjacent RuvB subunits; this complex drives branch migration. In the full resolvosome a probable DNA-RuvA(4)-RuvB(12)-RuvC(2) complex forms which resolves the HJ. Homohexamer which interacts with RecU.

Its subcellular location is the cytoplasm. It carries out the reaction ATP + H2O = ADP + phosphate + H(+). In terms of biological role, the RuvA-RuvB-RuvC complex processes Holliday junction (HJ) DNA during genetic recombination and DNA repair, while the RuvA-RuvB complex plays an important role in the rescue of blocked DNA replication forks via replication fork reversal (RFR). RuvA specifically binds to HJ cruciform DNA, conferring on it an open structure. The RuvB hexamer acts as an ATP-dependent pump, pulling dsDNA into and through the RuvAB complex. RuvB forms 2 homohexamers on either side of HJ DNA bound by 1 or 2 RuvA tetramers; 4 subunits per hexamer contact DNA at a time. Coordinated motions by a converter formed by DNA-disengaged RuvB subunits stimulates ATP hydrolysis and nucleotide exchange. Immobilization of the converter enables RuvB to convert the ATP-contained energy into a lever motion, pulling 2 nucleotides of DNA out of the RuvA tetramer per ATP hydrolyzed, thus driving DNA branch migration. The RuvB motors rotate together with the DNA substrate, which together with the progressing nucleotide cycle form the mechanistic basis for DNA recombination by continuous HJ branch migration. Branch migration allows RuvC to scan DNA until it finds its consensus sequence, where it cleaves and resolves cruciform DNA. This Bacillus subtilis (strain 168) protein is Holliday junction branch migration complex subunit RuvB.